Reading from the N-terminus, the 303-residue chain is Di/tripeptide transport system permease protein DppC (303 aa).

7 consecutive transmembrane segments (helical) span residues 33–53 (ALGG…APWV), 103–123 (LLIG…LGLL), 131–151 (AGPL…LLLA), 152–172 (VAIV…IAIV), 202–222 (AGTL…PLIV), 225–245 (TLSF…GLGV), and 267–287 (WWVV…INLM). The 190-residue stretch at 99 to 288 (ARLSLLIGLS…LSVLAINLMG (190 aa)) folds into the ABC transmembrane type-1 domain.

This sequence belongs to the binding-protein-dependent transport system permease family. OppBC subfamily. In terms of assembly, the complex is composed of two ATP-binding proteins (DppD and DppF), two transmembrane proteins (DppB and DppC) and a solute-binding protein (DppA1-A5). Five orthologous SBPs (DppA1-A5) are present in P.aeruginosa, which increases the substrate specificity of the DppBCDF transporter.

It is found in the cell inner membrane. Part of the ABC transporter DppABCDF involved in the uptake of various di/tripeptides. Is also involved in the uptake of phaseolotoxin, a toxic tripeptide inhibiting the enzyme ornithine carbamoyltransferase. Responsible for the translocation of the substrate across the membrane. This chain is Di/tripeptide transport system permease protein DppC, found in Pseudomonas aeruginosa (strain UCBPP-PA14).